A 420-amino-acid chain; its full sequence is UDP-N-acetylglucosamine 1-carboxyvinyltransferase (420 aa).

Position 22–23 (Lys22–Asn23) interacts with phosphoenolpyruvate. A UDP-N-acetyl-alpha-D-glucosamine-binding site is contributed by Arg93. The Proton donor role is filled by Cys117. 2-(S-cysteinyl)pyruvic acid O-phosphothioketal is present on Cys117. The UDP-N-acetyl-alpha-D-glucosamine site is built by Asp307 and Ile329.

The protein belongs to the EPSP synthase family. MurA subfamily.

The protein localises to the cytoplasm. It catalyses the reaction phosphoenolpyruvate + UDP-N-acetyl-alpha-D-glucosamine = UDP-N-acetyl-3-O-(1-carboxyvinyl)-alpha-D-glucosamine + phosphate. Its pathway is cell wall biogenesis; peptidoglycan biosynthesis. Functionally, cell wall formation. Adds enolpyruvyl to UDP-N-acetylglucosamine. This Alcanivorax borkumensis (strain ATCC 700651 / DSM 11573 / NCIMB 13689 / SK2) protein is UDP-N-acetylglucosamine 1-carboxyvinyltransferase.